The following is a 202-amino-acid chain: Holliday junction branch migration complex subunit RuvA (202 aa).

Residues 1 to 64 (MISRLRGTVL…EDAFDLFGFL (64 aa)) form a domain I region. The domain II stretch occupies residues 65 to 143 (TKGEEEVFLL…TIHLEAVSRG (79 aa)). A flexible linker region spans residues 143–147 (GTAPA). The tract at residues 148–202 (AVSGAHADLVSALLNLGYKQPQAEKAADLASERLGAEATFQALFREALKALRSGG) is domain III.

The protein belongs to the RuvA family. Homotetramer. Forms an RuvA(8)-RuvB(12)-Holliday junction (HJ) complex. HJ DNA is sandwiched between 2 RuvA tetramers; dsDNA enters through RuvA and exits via RuvB. An RuvB hexamer assembles on each DNA strand where it exits the tetramer. Each RuvB hexamer is contacted by two RuvA subunits (via domain III) on 2 adjacent RuvB subunits; this complex drives branch migration. In the full resolvosome a probable DNA-RuvA(4)-RuvB(12)-RuvC(2) complex forms which resolves the HJ.

It is found in the cytoplasm. Functionally, the RuvA-RuvB-RuvC complex processes Holliday junction (HJ) DNA during genetic recombination and DNA repair, while the RuvA-RuvB complex plays an important role in the rescue of blocked DNA replication forks via replication fork reversal (RFR). RuvA specifically binds to HJ cruciform DNA, conferring on it an open structure. The RuvB hexamer acts as an ATP-dependent pump, pulling dsDNA into and through the RuvAB complex. HJ branch migration allows RuvC to scan DNA until it finds its consensus sequence, where it cleaves and resolves the cruciform DNA. The sequence is that of Holliday junction branch migration complex subunit RuvA from Myxococcus xanthus (strain DK1622).